Reading from the N-terminus, the 213-residue chain is 5''-phosphoribostamycin phosphatase (213 aa).

Histidine 8 (tele-phosphohistidine intermediate) is an active-site residue. Histidine 155 is a catalytic residue.

This sequence belongs to the histidine phosphatase superfamily.

It catalyses the reaction 5''-phosphoribostamycin + H2O = ribostamycin + phosphate. Its pathway is antibiotic biosynthesis; butirosin biosynthesis. In terms of biological role, catalyzes dephosphorylation of 5''-phosphoribostamycin to generate ribostamycinin the biosynthetic pathway of butirosin. This is 5''-phosphoribostamycin phosphatase (btrP) from Niallia circulans (Bacillus circulans).